The primary structure comprises 262 residues: Tetrahydromethanopterin S-methyltransferase subunit C (262 aa).

The next 7 helical transmembrane spans lie at 27-47 (LVGIYIAHFFPSLAMLLGGLL), 72-92 (PSIGMVSLGMGTISALAGVLI), 98-118 (LPVLVTPILAAVIAVVVGFIV), 145-165 (ALAILGFCTAFAGGFSADIII), 173-193 (VIALAFIAAGMAILHPFNACI), 200-220 (KRTMTLAVACGFMAWLVFAIA), and 222-242 (LDIVSTAVAAIFWFIAYGTFV).

This sequence belongs to the MtrC family. As to quaternary structure, the complex is composed of 8 subunits; MtrA, MtrB, MtrC, MtrD, MtrE, MtrF, MtrG and MtrH.

It localises to the cell membrane. The enzyme catalyses 5-methyl-5,6,7,8-tetrahydromethanopterin + coenzyme M + 2 Na(+)(in) = 5,6,7,8-tetrahydromethanopterin + methyl-coenzyme M + 2 Na(+)(out). Its pathway is one-carbon metabolism; methanogenesis from CO(2); methyl-coenzyme M from 5,10-methylene-5,6,7,8-tetrahydromethanopterin: step 2/2. Part of a complex that catalyzes the formation of methyl-coenzyme M and tetrahydromethanopterin from coenzyme M and methyl-tetrahydromethanopterin. This is an energy-conserving, sodium-ion translocating step. The sequence is that of Tetrahydromethanopterin S-methyltransferase subunit C from Methanococcus maripaludis (strain C5 / ATCC BAA-1333).